Reading from the N-terminus, the 314-residue chain is Protein phosphatase PTC7 homolog fig (314 aa).

In terms of domain architecture, PPM-type phosphatase spans 43–309; sequence PYLVTVVQGR…DDITLILSSV (267 aa). The Mn(2+) site is built by aspartate 87, glycine 88, and aspartate 232.

Belongs to the PP2C family. The cofactor is Mg(2+). Mn(2+) is required as a cofactor.

It carries out the reaction O-phospho-L-seryl-[protein] + H2O = L-seryl-[protein] + phosphate. It catalyses the reaction O-phospho-L-threonyl-[protein] + H2O = L-threonyl-[protein] + phosphate. The polypeptide is Protein phosphatase PTC7 homolog fig (Drosophila sechellia (Fruit fly)).